The following is a 331-amino-acid chain: Ribosomal RNA small subunit methyltransferase H (331 aa).

S-adenosyl-L-methionine contacts are provided by residues 38-40 (GGY), D56, F83, D100, and Q107. The interval 287 to 331 (DEAELAENPRARSARLRVGVRTDAPAGKVDPQALGTPLIPKKGRR) is disordered.

It belongs to the methyltransferase superfamily. RsmH family.

It is found in the cytoplasm. It carries out the reaction cytidine(1402) in 16S rRNA + S-adenosyl-L-methionine = N(4)-methylcytidine(1402) in 16S rRNA + S-adenosyl-L-homocysteine + H(+). Its function is as follows. Specifically methylates the N4 position of cytidine in position 1402 (C1402) of 16S rRNA. The protein is Ribosomal RNA small subunit methyltransferase H of Cereibacter sphaeroides (strain KD131 / KCTC 12085) (Rhodobacter sphaeroides).